The primary structure comprises 90 residues: U7-theraphotoxin-Hhn1b (90 aa).

The N-terminal stretch at 1–19 is a signal peptide; it reads MKTAIFTVVLALAVFAVLS. Positions 20-50 are excised as a propeptide; that stretch reads FGWEANEKALSEEFTELIHEKEAASETEARE. Disulfide bonds link C51/C65, C58/C70, and C64/C81.

The protein belongs to the neurotoxin 10 (Hwtx-1) family. 13 (Hntx-13) subfamily. Expressed by the venom gland.

It is found in the secreted. Ion channel inhibitor. The polypeptide is U7-theraphotoxin-Hhn1b (Cyriopagopus hainanus (Chinese bird spider)).